The sequence spans 93 residues: Protein BOLA2 (93 aa).

Cys29 bears the S-glutathionyl cysteine; transient; alternate mark. Residues 72–93 (KAQTPQQWKPPSQDSATLTKDA) are disordered.

The protein belongs to the bolA/yrbA family. In terms of assembly, homodimer. Interacts in vitro with GRXS14, GRXS15, GRXS16 and GRXS17, but not with GRXC5. Interacts in vivo only with GRXS17. Can be either glutathionylated or forming covalent homodimers, depending on the oxidation state.

Its subcellular location is the cytoplasm. The protein resides in the nucleus. Its function is as follows. May act either alone or in interaction with glutaredoxin as a redox-regulated transcriptional regulator, or as a factor regulating Fe-S cluster biogenesis. The GRXS17-BOLA2 heterodimer binds a labile, oxygen sensitive iron-sulfur cluster. This is Protein BOLA2 from Arabidopsis thaliana (Mouse-ear cress).